Consider the following 126-residue polypeptide: 13 kDa ribonucleoprotein-associated protein (126 aa).

This sequence belongs to the eukaryotic ribosomal protein eL8 family. Component of the U3 snoRNP particle. Binds to the C'/D and B/C motifs in U3 snoRNA. Component of the 25S U4/U6.U5 tri-snRNP particle, a subcomplex of the spliceosome. Binds to the 5' stem-loop of U4 snRNA.

The protein resides in the nucleus. The protein localises to the nucleolus. Common component of the spliceosome and rRNA processing machinery. In association with the spliceosomal U4/U6.U5 tri-snRNP particle, required for splicing of pre-mRNA. In association with box C/D snoRNPs, required for processing of pre-ribosomal RNA (rRNA) and site-specific 2'-O-methylation of substrate RNAs. Essential for the accumulation and stability of U4 snRNA, U6 snRNA, and box C/D snoRNAs. The sequence is that of 13 kDa ribonucleoprotein-associated protein (SNU13) from Candida albicans (strain SC5314 / ATCC MYA-2876) (Yeast).